A 190-amino-acid polypeptide reads, in one-letter code: Adenylate kinase (190 aa).

11–16 (GAGKGT) is an ATP binding site. The NMP stretch occupies residues 31 to 60 (STGDIFRFNLKNDTELGKQARVFMDNGELV). Residues T32, R37, 58 to 60 (ELV), 86 to 89 (GYPR), and Q93 contribute to the AMP site. Residues 127-137 (ERGKTSGRADD) are LID. R128 contacts ATP. 2 residues coordinate AMP: R134 and R146. Residue G174 participates in ATP binding.

This sequence belongs to the adenylate kinase family. In terms of assembly, monomer.

It localises to the cytoplasm. The catalysed reaction is AMP + ATP = 2 ADP. Its pathway is purine metabolism; AMP biosynthesis via salvage pathway; AMP from ADP: step 1/1. In terms of biological role, catalyzes the reversible transfer of the terminal phosphate group between ATP and AMP. Plays an important role in cellular energy homeostasis and in adenine nucleotide metabolism. The sequence is that of Adenylate kinase from Flavobacterium johnsoniae (strain ATCC 17061 / DSM 2064 / JCM 8514 / BCRC 14874 / CCUG 350202 / NBRC 14942 / NCIMB 11054 / UW101) (Cytophaga johnsonae).